Consider the following 655-residue polypeptide: tRNA uridine 5-carboxymethylaminomethyl modification enzyme MnmG (655 aa).

13 to 18 (GGGHAG) contributes to the FAD binding site. 281 to 295 (GPRYCPSVEDKINRF) provides a ligand contact to NAD(+).

It belongs to the MnmG family. As to quaternary structure, homodimer. Heterotetramer of two MnmE and two MnmG subunits. It depends on FAD as a cofactor.

The protein localises to the cytoplasm. Functionally, NAD-binding protein involved in the addition of a carboxymethylaminomethyl (cmnm) group at the wobble position (U34) of certain tRNAs, forming tRNA-cmnm(5)s(2)U34. In Paracidovorax citrulli (strain AAC00-1) (Acidovorax citrulli), this protein is tRNA uridine 5-carboxymethylaminomethyl modification enzyme MnmG.